A 270-amino-acid chain; its full sequence is Cytosolic Fe-S cluster assembly factor NUBP2 homolog (270 aa).

Residue 21–28 coordinates ATP; the sequence is GKGGVGKS. 2 residues coordinate [4Fe-4S] cluster: Cys-195 and Cys-198.

Belongs to the Mrp/NBP35 ATP-binding proteins family. NUBP2/CFD1 subfamily. In terms of assembly, heterotetramer of 2 NUBP1 and 2 NUBP2 chains. [4Fe-4S] cluster is required as a cofactor.

The protein resides in the cytoplasm. Its function is as follows. Component of the cytosolic iron-sulfur (Fe/S) protein assembly (CIA) machinery. Required for maturation of extramitochondrial Fe-S proteins. The NUBP1-NUBP2 heterotetramer forms a Fe-S scaffold complex, mediating the de novo assembly of an Fe-S cluster and its transfer to target apoproteins. This is Cytosolic Fe-S cluster assembly factor NUBP2 homolog from Nematostella vectensis (Starlet sea anemone).